Here is a 1187-residue protein sequence, read N- to C-terminus: DNA excision repair protein CSB (1187 aa).

The span at 31 to 43 shows a compositional bias: polar residues; that stretch reads QATTDPADSSGPT. Disordered stretches follow at residues 31 to 53, 75 to 102, 217 to 242, and 265 to 351; these read QATT…PDDA, IKGA…HHGA, KRVE…MEAS, and DSES…EGSD. Composition is skewed to basic and acidic residues over residues 92–101 and 217–230; these read KGKDQPDHHG and KRVE…RQDD. Positions 300–319 are enriched in basic residues; the sequence is KRPRNKTKRPLPGKKWRKAN. Residues 339 to 351 are compositionally biased toward acidic residues; it reads SDDDEDQVTEGSD. The Helicase ATP-binding domain occupies 384 to 580; it reads WELHCQRAGG…WSLFDFVFPG (197 aa). 397 to 404 is a binding site for ATP; the sequence is DEMGLGKT. Positions 457–480 are disordered; it reads SSSKKSKRSSDSDSEASWDSDQEE. The span at 468–480 shows a compositional bias: acidic residues; the sequence is SDSEASWDSDQEE. The DEGH box signature appears at 531-534; the sequence is DEGH. The 161-residue stretch at 716-876 folds into the Helicase C-terminal domain; sequence KVVEQVLKVW…RRFFKARDMK (161 aa). Disordered stretches follow at residues 916-945 and 1095-1116; these read LYAA…HCPD and GSAS…SSTR. Positions 918 to 933 are enriched in low complexity; the sequence is AASATPTTSGTEPSSS.

Belongs to the SNF2/RAD54 helicase family. Homodimer. Binds DNA. In terms of tissue distribution, expressed in proliferating tissues. Highly expressed in shoot apical meristem (SAM). Expressed in roots, young leaves, flag leaves, and panicles. Expressed at very low levels in mature leaves.

It is found in the nucleus. Functionally, essential factor involved in transcription-coupled nucleotide excision repair (TCR) which allows RNA polymerase II-blocking lesions to be rapidly removed from the transcribed strand of active genes. Upon DNA-binding, it locally modifies DNA conformation by wrapping the DNA around itself, thereby modifying the interface between stalled RNA polymerase II and DNA. It is required for transcription-coupled repair complex formation. The polypeptide is DNA excision repair protein CSB (Oryza sativa subsp. japonica (Rice)).